A 302-amino-acid chain; its full sequence is Sulfate adenylyltransferase subunit 2 (302 aa).

It belongs to the PAPS reductase family. CysD subfamily. Heterodimer composed of CysD, the smaller subunit, and CysN.

It carries out the reaction sulfate + ATP + H(+) = adenosine 5'-phosphosulfate + diphosphate. The protein operates within sulfur metabolism; hydrogen sulfide biosynthesis; sulfite from sulfate: step 1/3. Its function is as follows. With CysN forms the ATP sulfurylase (ATPS) that catalyzes the adenylation of sulfate producing adenosine 5'-phosphosulfate (APS) and diphosphate, the first enzymatic step in sulfur assimilation pathway. APS synthesis involves the formation of a high-energy phosphoric-sulfuric acid anhydride bond driven by GTP hydrolysis by CysN coupled to ATP hydrolysis by CysD. This chain is Sulfate adenylyltransferase subunit 2, found in Baumannia cicadellinicola subsp. Homalodisca coagulata.